Reading from the N-terminus, the 30-residue chain is Cysteine-rich venom protein okinavin (30 aa).

Residues 1–30 (SVDFDSESPRKPXIQNEIVDLHNPLRRXVN) form a disordered region.

It belongs to the CRISP family. Post-translationally, contains 8 disulfide bonds. Expressed by the venom gland.

Its subcellular location is the secreted. Its function is as follows. Inhibits calcium-activated potassium channels (KCa), voltage-gated potassium channel (Kv), and the calcium release channel/ryanodine receptor (RyR). In Ovophis okinavensis (Ryukyu Island pit viper), this protein is Cysteine-rich venom protein okinavin.